Here is a 475-residue protein sequence, read N- to C-terminus: MGSIAKEEQPSTKVEKPTFSSKANTLEFAQSLDAKDHMRRFRDQYIIPSKANIKTKKLAKPGLSDEPSIYFCGNSLGLQPKCVQEYLQAHLDTWSSIAVHGHFRDLEDSPLTQWQLLAEHAAKQCAPIVGAKASEVAIMGTLTTNLHLLMASFYTPTPEKSKIIMEWKAFPSDHYAIESQIRGHGYNPEEAMVMIAPDEGSYEISTEKILRTIDEHASTTALLLLPGIQYYTGQLFDIKTITAYAQSKGLTVGWDLAHAAGNVPLQLHDWNVDFAVWCTYKYMNAGPGSIAGAYVHERHGEVDYSEGEEKPKYRHRLMGWYGGDQSCRFLMNNKFRPSPGASGYQVSNPSVVDLTSLCAALSIFNQTSMAEISQKTLHLTAYLEHLLLSTNSSDSPAFRIITPSDPSARGTQLSVLLKPGRLETLSDMLEEAGIVADKRKPDVIRVAPVPLYNTYEDVWNFVQIFNKALEKCEEA.

Pyridoxal 5'-phosphate is bound by residues Leu142, Thr143, 170-173 (FPSD), Asp255, His258, and Tyr280. N6-(pyridoxal phosphate)lysine is present on Lys281. Pyridoxal 5'-phosphate contacts are provided by Trp320 and Asn348.

The protein belongs to the kynureninase family. Homodimer. It depends on pyridoxal 5'-phosphate as a cofactor.

Its subcellular location is the cytoplasm. The catalysed reaction is L-kynurenine + H2O = anthranilate + L-alanine + H(+). It carries out the reaction 3-hydroxy-L-kynurenine + H2O = 3-hydroxyanthranilate + L-alanine + H(+). Its pathway is amino-acid degradation; L-kynurenine degradation; L-alanine and anthranilate from L-kynurenine: step 1/1. It functions in the pathway cofactor biosynthesis; NAD(+) biosynthesis; quinolinate from L-kynurenine: step 2/3. Its function is as follows. Catalyzes the cleavage of L-kynurenine (L-Kyn) and L-3-hydroxykynurenine (L-3OHKyn) into anthranilic acid (AA) and 3-hydroxyanthranilic acid (3-OHAA), respectively. This Botryotinia fuckeliana (strain B05.10) (Noble rot fungus) protein is Kynureninase (bna5).